The following is a 75-amino-acid chain: UPF0352 protein YejL (75 aa).

The protein belongs to the UPF0352 family.

The protein is UPF0352 protein YejL of Shigella flexneri.